The following is a 248-amino-acid chain: Ubiquinone biosynthesis O-methyltransferase (248 aa).

Positions 41, 72, 93, and 136 each coordinate S-adenosyl-L-methionine.

This sequence belongs to the methyltransferase superfamily. UbiG/COQ3 family.

The enzyme catalyses a 3-demethylubiquinol + S-adenosyl-L-methionine = a ubiquinol + S-adenosyl-L-homocysteine + H(+). The catalysed reaction is a 3-(all-trans-polyprenyl)benzene-1,2-diol + S-adenosyl-L-methionine = a 2-methoxy-6-(all-trans-polyprenyl)phenol + S-adenosyl-L-homocysteine + H(+). Its pathway is cofactor biosynthesis; ubiquinone biosynthesis. O-methyltransferase that catalyzes the 2 O-methylation steps in the ubiquinone biosynthetic pathway. The chain is Ubiquinone biosynthesis O-methyltransferase from Brucella anthropi (strain ATCC 49188 / DSM 6882 / CCUG 24695 / JCM 21032 / LMG 3331 / NBRC 15819 / NCTC 12168 / Alc 37) (Ochrobactrum anthropi).